The primary structure comprises 347 residues: 4-hydroxy-tetrahydrodipicolinate reductase 1, chloroplastic (347 aa).

The N-terminal 51 residues, M1 to L51, are a transit peptide targeting the chloroplast. At S52 the chain carries N-acetylserine. NAD(+)-binding positions include G79 to M84, G171 to T173, and S194 to M197. Catalysis depends on H230, which acts as the Proton donor/acceptor. The Proton donor role is filled by K234. G239–T240 provides a ligand contact to (S)-2,3,4,5-tetrahydrodipicolinate.

It belongs to the DapB family.

Its subcellular location is the plastid. It localises to the chloroplast. It carries out the reaction (S)-2,3,4,5-tetrahydrodipicolinate + NAD(+) + H2O = (2S,4S)-4-hydroxy-2,3,4,5-tetrahydrodipicolinate + NADH + H(+). It catalyses the reaction (S)-2,3,4,5-tetrahydrodipicolinate + NADP(+) + H2O = (2S,4S)-4-hydroxy-2,3,4,5-tetrahydrodipicolinate + NADPH + H(+). Its pathway is amino-acid biosynthesis; L-lysine biosynthesis via DAP pathway; (S)-tetrahydrodipicolinate from L-aspartate: step 4/4. Functionally, catalyzes the conversion of 4-hydroxy-tetrahydrodipicolinate (HTPA) to tetrahydrodipicolinate. The protein is 4-hydroxy-tetrahydrodipicolinate reductase 1, chloroplastic (DAPB1) of Arabidopsis thaliana (Mouse-ear cress).